We begin with the raw amino-acid sequence, 361 residues long: Molybdenum import ATP-binding protein ModC (361 aa).

The region spanning 1–228 (MLNINIEKQL…EQMRPWVPLQ (228 aa)) is the ABC transporter domain. 31 to 38 (GRSGAGKT) is a binding site for ATP. The 68-residue stretch at 289–356 (GSSVRNLLRG…IKGVTMTQMD (68 aa)) folds into the Mop domain.

Belongs to the ABC transporter superfamily. Molybdate importer (TC 3.A.1.8) family. As to quaternary structure, the complex is composed of two ATP-binding proteins (ModC), two transmembrane proteins (ModB) and a solute-binding protein (ModA).

It is found in the cell inner membrane. The catalysed reaction is molybdate(out) + ATP + H2O = molybdate(in) + ADP + phosphate + H(+). Its function is as follows. Part of the ABC transporter complex ModABC involved in molybdenum import. Responsible for energy coupling to the transport system. The protein is Molybdenum import ATP-binding protein ModC of Shewanella sp. (strain MR-7).